A 296-amino-acid polypeptide reads, in one-letter code: MIDKLKTETRNQATMALDSMPIHDILKAMNREDGKVPTAIATQLPQIEKAVKLVIASFQQGGRLIYAGAGTSGRLGVLDAVECKPTFGVSPEMVRGVIAGGEQAFTEAVEGAEDDERAGANDCNRLNIGEKDTVIALAASGRTPYAIGVLKEAEARGANTVSIACNKEAKMSQYASVAIEVETGPEVLTGSTRLKAGTAQKLILNMISTTAMVGIGKVYQNLMVDVQPTNQKLVERAKRIIMEATDSTYETAADYYQKANGHVKAAIVMILLDCSYDEALTKLQNAKGFIRKTVDK.

The 164-residue stretch at 54–217 folds into the SIS domain; sequence VIASFQQGGR…STTAMVGIGK (164 aa). Residue glutamate 82 is the Proton donor of the active site. The active site involves glutamate 113.

Belongs to the GCKR-like family. MurNAc-6-P etherase subfamily. As to quaternary structure, homodimer.

The catalysed reaction is N-acetyl-D-muramate 6-phosphate + H2O = N-acetyl-D-glucosamine 6-phosphate + (R)-lactate. The protein operates within amino-sugar metabolism; N-acetylmuramate degradation. Functionally, specifically catalyzes the cleavage of the D-lactyl ether substituent of MurNAc 6-phosphate, producing GlcNAc 6-phosphate and D-lactate. The polypeptide is N-acetylmuramic acid 6-phosphate etherase (Shouchella clausii (strain KSM-K16) (Alkalihalobacillus clausii)).